Reading from the N-terminus, the 185-residue chain is Large ribosomal subunit protein uL5 (185 aa).

It belongs to the universal ribosomal protein uL5 family. As to quaternary structure, part of the 50S ribosomal subunit; part of the 5S rRNA/L5/L18/L25 subcomplex. Contacts the 5S rRNA and the P site tRNA. Forms a bridge to the 30S subunit in the 70S ribosome.

In terms of biological role, this is one of the proteins that bind and probably mediate the attachment of the 5S RNA into the large ribosomal subunit, where it forms part of the central protuberance. In the 70S ribosome it contacts protein S13 of the 30S subunit (bridge B1b), connecting the 2 subunits; this bridge is implicated in subunit movement. Contacts the P site tRNA; the 5S rRNA and some of its associated proteins might help stabilize positioning of ribosome-bound tRNAs. This Protochlamydia amoebophila (strain UWE25) protein is Large ribosomal subunit protein uL5.